We begin with the raw amino-acid sequence, 845 residues long: Dynein axonemal assembly factor 5 (845 aa).

8 HEAT repeats span residues 47 to 84 (DVFD…SLPP), 138 to 175 (ECYP…LADT), 180 to 217 (PFTE…HMDA), 260 to 297 (SFFE…QYFN), 332 to 369 (QRSL…HAEA), 523 to 561 (NFGQ…LDAA), 674 to 715 (SESV…MSVE), and 766 to 803 (AIVK…SHPE).

This sequence belongs to the DNAAF5 family. Expressed in testis.

It is found in the cytoplasm. The protein localises to the dynein axonemal particle. In terms of biological role, cytoplasmic protein involved in the delivery of the dynein machinery to the motile cilium. It is required for the assembly of the axonemal dynein inner and outer arms, two structures attached to the peripheral outer doublet A microtubule of the axoneme, that play a crucial role in cilium motility. The sequence is that of Dynein axonemal assembly factor 5 from Drosophila melanogaster (Fruit fly).